The sequence spans 253 residues: Chitooligosaccharide deacetylase (253 aa).

Residues H61 and H126 each coordinate Mg(2+).

This sequence belongs to the YdjC deacetylase family. ChbG subfamily. As to quaternary structure, homodimer. Mg(2+) is required as a cofactor.

Its subcellular location is the cytoplasm. It catalyses the reaction N,N'-diacetylchitobiose + H2O = N-acetyl-beta-D-glucosaminyl-(1-&gt;4)-D-glucosamine + acetate. It carries out the reaction diacetylchitobiose-6'-phosphate + H2O = N'-monoacetylchitobiose-6'-phosphate + acetate. It participates in glycan degradation; chitin degradation. Its function is as follows. Involved in the degradation of chitin. ChbG is essential for growth on the acetylated chitooligosaccharides chitobiose and chitotriose but is dispensable for growth on cellobiose and chitosan dimer, the deacetylated form of chitobiose. Deacetylation of chitobiose-6-P and chitotriose-6-P is necessary for both the activation of the chb promoter by the regulatory protein ChbR and the hydrolysis of phosphorylated beta-glucosides by the phospho-beta-glucosidase ChbF. Catalyzes the removal of only one acetyl group from chitobiose-6-P to yield monoacetylchitobiose-6-P, the inducer of ChbR and the substrate of ChbF. The polypeptide is Chitooligosaccharide deacetylase (Serratia marcescens).